A 418-amino-acid polypeptide reads, in one-letter code: UPF0754 membrane protein alr5253 (418 aa).

The next 2 membrane-spanning stretches (helical) occupy residues 10-30 (WSHL…GYFT) and 394-414 (IVSL…AFFI).

It belongs to the UPF0754 family.

It localises to the cell inner membrane. The chain is UPF0754 membrane protein alr5253 from Nostoc sp. (strain PCC 7120 / SAG 25.82 / UTEX 2576).